Here is a 953-residue protein sequence, read N- to C-terminus: Coatomer subunit beta (953 aa).

Threonine 2 carries the post-translational modification N-acetylthreonine. 6 HEAT repeats span residues 96-131 (HEMI…KEAE), 132-168 (LLEP…NFEH), 240-276 (SERA…SAPT), 277-314 (AIKA…HPAH), 316-353 (RVLQ…SRNV), and 396-433 (DMAA…RFDN). Residue lysine 494 is modified to N6-acetyllysine.

In terms of assembly, oligomeric complex that consists of at least the alpha, beta, beta', gamma, delta, epsilon and zeta subunits. Interacts (via C-terminus) with HIV-1 Nef; the interaction is direct. Interacts with CAPN8 and PRKCE. Interacts with SCYL1. Interacts with COPG1. Interacts with ARF1 (myristoylated); this interaction is required for binding of COPB1 to Golgi membranes. Interacts (via trunk domain) with ARF1 (via switch I region); the interaction is direct. Interacts with KCNK2 (via N-terminus); this interaction increases the channel-mediated whole cell currents and promotes plasma membrane expression of KCNK2. Interacts with anthrax lethal factor (LF); this interaction may facilitate endosomal vesicle membrane translocation of LF and its release from the lumen of endosomal vesicles to external milieu. Interacts with STX17. Interacts with TMEM115. Interacts with TMEM41B.

The protein localises to the cytoplasm. It localises to the golgi apparatus membrane. It is found in the cytoplasmic vesicle. Its subcellular location is the COPI-coated vesicle membrane. The protein resides in the cell membrane. The protein localises to the endoplasmic reticulum-Golgi intermediate compartment. In terms of biological role, the coatomer is a cytosolic protein complex that binds to dilysine motifs and reversibly associates with Golgi non-clathrin-coated vesicles, which further mediate biosynthetic protein transport from the ER, via the Golgi up to the trans Golgi network. Coatomer complex is required for budding from Golgi membranes, and is essential for the retrograde Golgi-to-ER transport of dilysine-tagged proteins. In mammals, the coatomer can only be recruited by membranes associated to ADP-ribosylation factors (ARFs), which are small GTP-binding proteins; the complex also influences the Golgi structural integrity, as well as the processing, activity, and endocytic recycling of LDL receptors. Plays a functional role in facilitating the transport of kappa-type opioid receptor mRNAs into axons and enhances translation of these proteins. Required for limiting lipid storage in lipid droplets. Involved in lipid homeostasis by regulating the presence of perilipin family members PLIN2 and PLIN3 at the lipid droplet surface and promoting the association of adipocyte surface triglyceride lipase (PNPLA2) with the lipid droplet to mediate lipolysis. Involved in the Golgi disassembly and reassembly processes during cell cycle. Involved in autophagy by playing a role in early endosome function. Plays a role in organellar compartmentalization of secretory compartments including endoplasmic reticulum (ER)-Golgi intermediate compartment (ERGIC), Golgi, trans-Golgi network (TGN) and recycling endosomes, and in biosynthetic transport of CAV1. Promotes degradation of Nef cellular targets CD4 and MHC class I antigens by facilitating their trafficking to degradative compartments. This is Coatomer subunit beta (COPB1) from Pongo abelii (Sumatran orangutan).